Reading from the N-terminus, the 214-residue chain is Oocyte zinc finger protein XlCOF10 (214 aa).

7 consecutive C2H2-type zinc fingers follow at residues 1 to 23 (FSCS…RQLH), 29 to 51 (FTCS…HRIH), 57 to 79 (FTCD…QKSH), 85 to 107 (FCCS…QRTH), 113 to 135 (FTCT…QKSH), 141 to 163 (FSCS…QRIH), and 169 to 191 (FSCS…EKCH).

This sequence belongs to the krueppel C2H2-type zinc-finger protein family.

It is found in the nucleus. May be involved in transcriptional regulation. This Xenopus laevis (African clawed frog) protein is Oocyte zinc finger protein XlCOF10.